Here is a 339-residue protein sequence, read N- to C-terminus: Transaldolase (339 aa).

K135 serves as the catalytic Schiff-base intermediate with substrate.

Belongs to the transaldolase family. Type 1 subfamily. In terms of assembly, homodimer.

The protein localises to the cytoplasm. It catalyses the reaction D-sedoheptulose 7-phosphate + D-glyceraldehyde 3-phosphate = D-erythrose 4-phosphate + beta-D-fructose 6-phosphate. It participates in carbohydrate degradation; pentose phosphate pathway; D-glyceraldehyde 3-phosphate and beta-D-fructose 6-phosphate from D-ribose 5-phosphate and D-xylulose 5-phosphate (non-oxidative stage): step 2/3. Transaldolase is important for the balance of metabolites in the pentose-phosphate pathway. The protein is Transaldolase of Prochlorococcus marinus (strain MIT 9211).